Reading from the N-terminus, the 421-residue chain is FBD-associated F-box protein At5g56370 (421 aa).

In terms of domain architecture, F-box spans 1 to 52; it reads MDSISLLPDDFLLRILSLLPTKDVLNTSVLSKRWRYLWKLVPKLQYSLIDKN. The 51-residue stretch at 332 to 382 folds into the FBD domain; that stretch reads HWEEPSSVPETLMFVLETLEWRNYRGLKMENELASFLLKHSRRLKIATFSP.

This Arabidopsis thaliana (Mouse-ear cress) protein is FBD-associated F-box protein At5g56370.